We begin with the raw amino-acid sequence, 69 residues long: uncharacterized protein (69 aa).

At methionine 1–lysine 15 the chain is on the cytoplasmic side. The chain crosses the membrane as a helical span at residues leucine 16 to tyrosine 36. Residues methionine 37–tyrosine 69 lie on the Extracellular side of the membrane. N-linked (GlcNAc...) asparagine; by host glycosylation occurs at asparagine 51.

Belongs to the asfivirus X69R family.

It is found in the host membrane. This is an uncharacterized protein from African swine fever virus (isolate Tick/Malawi/Lil 20-1/1983) (ASFV).